The sequence spans 500 residues: Lycopene beta cyclase, chloroplastic (500 aa).

A chloroplast-targeting transit peptide spans Met1–Gly81. NAD(+) is bound at residue Leu86–Pro114.

The protein belongs to the lycopene cyclase family.

The protein resides in the plastid. Its subcellular location is the chloroplast. It catalyses the reaction a carotenoid psi-end group = a carotenoid beta-end derivative. It functions in the pathway carotenoid biosynthesis; beta-carotene biosynthesis. Its pathway is carotenoid biosynthesis; beta-zeacarotene biosynthesis. In terms of biological role, catalyzes the double cyclization reaction which converts lycopene to beta-carotene and neurosporene to beta-zeacarotene. This is Lycopene beta cyclase, chloroplastic (LCY1) from Solanum lycopersicum (Tomato).